A 147-amino-acid polypeptide reads, in one-letter code: 3-dehydroquinate dehydratase (147 aa).

The Proton acceptor role is filled by Y24. Residues N75, H81, and D88 each coordinate substrate. H101 (proton donor) is an active-site residue. Substrate contacts are provided by residues 102 to 103 (IS) and R112.

It belongs to the type-II 3-dehydroquinase family. In terms of assembly, homododecamer.

It catalyses the reaction 3-dehydroquinate = 3-dehydroshikimate + H2O. It functions in the pathway metabolic intermediate biosynthesis; chorismate biosynthesis; chorismate from D-erythrose 4-phosphate and phosphoenolpyruvate: step 3/7. Functionally, catalyzes a trans-dehydration via an enolate intermediate. The sequence is that of 3-dehydroquinate dehydratase from Cereibacter sphaeroides (strain KD131 / KCTC 12085) (Rhodobacter sphaeroides).